The chain runs to 353 residues: Cytochrome bc1 complex Rieske iron-sulfur subunit (353 aa).

The segment at 1-51 is disordered; the sequence is MSSQDIPEENLPAEQDRPHGAAARPADETNPFADPGLPPHEPRVQDVDERA. Basic and acidic residues predominate over residues 40 to 51; that stretch reads HEPRVQDVDERA. Helical transmembrane passes span 60 to 80, 99 to 119, and 164 to 184; these read ALLFTLSMLATIAFIAAFVAI, FALGMTLGVALFAIGAGAVHW, and LIRNTMLGALTLVPLSGVVLL. A Rieske domain is found at 246–336; that stretch reads KAALMIIRLE…IGVNDEGYLE (91 aa). [2Fe-2S] cluster contacts are provided by C279, H281, C298, and H301. The cysteines at positions 284 and 300 are disulfide-linked.

The protein belongs to the Rieske iron-sulfur protein family. The cytochrome bc1 complex is composed of a cytochrome b (QcrB), the Rieske iron-sulfur protein (QcrA) and a diheme cytochrome c (QcrC) subunit. [2Fe-2S] cluster is required as a cofactor.

The protein resides in the cell membrane. Functionally, iron-sulfur subunit of the cytochrome bc1 complex, an essential component of the respiratory electron transport chain required for ATP synthesis. The bc1 complex catalyzes the oxidation of menaquinol and the reduction of cytochrome c in the respiratory chain. The bc1 complex operates through a Q-cycle mechanism that couples electron transfer to generation of the proton gradient that drives ATP synthesis. This chain is Cytochrome bc1 complex Rieske iron-sulfur subunit (qcrA), found in Streptomyces coelicolor (strain ATCC BAA-471 / A3(2) / M145).